Reading from the N-terminus, the 738-residue chain is Putative cyclic nucleotide-gated ion channel 7 (738 aa).

The Cytoplasmic segment spans residues 1-104 (MYKSQYISGQ…DKTLLVWNRL (104 aa)). Residues 105–125 (FVISCILAVSVDPLFFYLPIV) traverse the membrane as a helical segment. Topologically, residues 126-139 (DNSGSSCIGIDTKL) are extracellular. A helical transmembrane segment spans residues 140–160 (AVTTTTLRTIVDVFYLTRMAL). At 161 to 193 (QFRTAYIAPSSRVFGRGELVIDPAKIAERYLTR) the chain is on the cytoplasmic side. The helical transmembrane segment at 194-214 (YFVVDFLAVLPLPQIAVWKFL) threads the bilayer. Over 215 to 227 (HGSKGSDVLPTKT) the chain is Extracellular. Residues 228–248 (ALLNIVIVQYIPRFVRFIPLT) form a helical membrane-spanning segment. Residues 249–268 (SELKKTAGAFAEGAWAGAAY) lie on the Cytoplasmic side of the membrane. A helical membrane pass occupies residues 269–289 (YLLWYMLASHITGAFWYMLSV). Residues 290 to 395 (ERNDTCWRFA…GQGLQTSTFP (106 aa)) lie on the Extracellular side of the membrane. The chain crosses the membrane as a helical span at residues 396 to 416 (GEVLFSIAIAIAGLLLFALLI). Residues 417-738 (GNMQTYLQSL…KPPEPDFDAE (322 aa)) lie on the Cytoplasmic side of the membrane. Residues 502-632 (LFAN…TFRF) and Glu573 each bind a nucleoside 3',5'-cyclic phosphate. Residues 618–633 (FRRLHSRQVQQTFRFY) are calmodulin-binding. An IQ domain is found at 638–667 (RTWASCFIQAAWRRYSRRKNAELRRIEEKE). 2 disordered regions span residues 671 to 693 (GYED…SESS) and 715 to 738 (LRSS…FDAE).

This sequence belongs to the cyclic nucleotide-gated cation channel (TC 1.A.1.5) family. As to quaternary structure, homotetramer or heterotetramer.

The protein localises to the cell membrane. Putative cyclic nucleotide-gated ion channel. This chain is Putative cyclic nucleotide-gated ion channel 7 (CNGC7), found in Arabidopsis thaliana (Mouse-ear cress).